The primary structure comprises 203 residues: Peroxiredoxin (203 aa).

Residues 3-156 (VVLGQKAPDF…IIRVIKALQF (154 aa)) form the Thioredoxin domain. Residue Cys44 is the Cysteine sulfenic acid (-SOH) intermediate of the active site. Substrate is bound at residue Arg119.

Belongs to the peroxiredoxin family. Prx6 subfamily. Homodecamer. Pentamer of dimers that assemble into a ring structure.

The protein resides in the cytoplasm. It carries out the reaction a hydroperoxide + [thioredoxin]-dithiol = an alcohol + [thioredoxin]-disulfide + H2O. Thiol-specific peroxidase that catalyzes the reduction of hydrogen peroxide and organic hydroperoxides to water and alcohols, respectively. Plays a role in cell protection against oxidative stress by detoxifying peroxides. This Thermoplasma volcanium (strain ATCC 51530 / DSM 4299 / JCM 9571 / NBRC 15438 / GSS1) protein is Peroxiredoxin.